The following is a 1041-amino-acid chain: Importin-9 (1041 aa).

Position 2 is an N-acetylalanine (A2). The Importin N-terminal domain maps to 43 to 119 (AEEQIKVLEV…RELLPNGLRE (77 aa)). Residues 936–967 (QATPAEWNQDDSNDMWEDQEEEEEEEEDGLAG) are disordered. Residues 943–964 (NQDDSNDMWEDQEEEEEEEEDG) are compositionally biased toward acidic residues.

This sequence belongs to the importin beta family. Interacts with histones H2A, H2B, H3 and H4. The binding is coupled to RanGTP cycles. Interacts with AKIRIN2; promoting association with pre-assembled proteasomes. Associates with pre-assembled proteasomes; interaction is indirect and mediated via interaction with AKIRIN2. Interacts with PPP2R1A and PPP2R1B.

The protein resides in the cytoplasm. It is found in the nucleus. Nuclear transport receptor that mediates nuclear import of proteins, such as histones, proteasome and actin. Serves as receptor for nuclear localization signals (NLS) in cargo substrates. Is thought to mediate docking of the importin/substrate complex to the nuclear pore complex (NPC) through binding to nucleoporin and the complex is subsequently translocated through the pore by an energy requiring, Ran-dependent mechanism. At the nucleoplasmic side of the NPC, Ran binds to the importin, the importin/substrate complex dissociates and importin is re-exported from the nucleus to the cytoplasm where GTP hydrolysis releases Ran. The directionality of nuclear import is thought to be conferred by an asymmetric distribution of the GTP- and GDP-bound forms of Ran between the cytoplasm and nucleus. Mediates the import of pre-assembled proteasomes into the nucleus; AKIRIN2 acts as a molecular bridge between IPO9 and the proteasome complex. Mediates the nuclear import of histones H2A, H2B, H4 and H4. In addition to nuclear import, also acts as a chaperone for histones by preventing inappropriate non-nucleosomal interactions. Mediates the nuclear import of actin. This Mus musculus (Mouse) protein is Importin-9.